Consider the following 517-residue polypeptide: Ubiquitin carboxyl-terminal hydrolase 30 (517 aa).

Residues 1 to 35 are Mitochondrial intermembrane-facing; the sequence is MLSSRAEAAMTAADRAIQRFLRTGAAVRYKVMKNW. Residues 36–56 traverse the membrane as a helical segment; it reads GVIGGIAAALAAGIYVIWGPI. The Cytoplasmic portion of the chain corresponds to 57-517; sequence TERKKRRKGL…HQSQECKSEE (461 aa). Positions 68-502 constitute a USP domain; that stretch reads PGLVNLGNTC…SAYLLFYERV (435 aa). The active-site Nucleophile is C77. Residues K235 and K289 each participate in a glycyl lysine isopeptide (Lys-Gly) (interchain with G-Cter in ubiquitin) cross-link. Residues 364–395 are disordered; that stretch reads SQHNPKLNKNPGPTLELQDGPGAPTPVLNQPG. H452 acts as the Proton acceptor in catalysis.

The protein belongs to the peptidase C19 family. Post-translationally, ubiquitinated by parkin (PRKN) at Lys-235 and Lys-289, leading to its degradation. As to expression, expressed in skeletal muscle, pancreas, liver and kidney.

The protein resides in the mitochondrion outer membrane. The catalysed reaction is Thiol-dependent hydrolysis of ester, thioester, amide, peptide and isopeptide bonds formed by the C-terminal Gly of ubiquitin (a 76-residue protein attached to proteins as an intracellular targeting signal).. With respect to regulation, inhibited by the diterpenoid derivative 15-oxospiramilactone (S3). In terms of biological role, deubiquitinating enzyme tethered to the mitochondrial outer membrane that acts as a key inhibitor of mitophagy by counteracting the action of parkin (PRKN): hydrolyzes ubiquitin attached by parkin on target proteins, such as RHOT1/MIRO1 and TOMM20, thereby blocking parkin's ability to drive mitophagy. Preferentially cleaves 'Lys-6'- and 'Lys-11'-linked polyubiquitin chains, 2 types of linkage that participate in mitophagic signaling. Does not cleave efficiently polyubiquitin phosphorylated at 'Ser-65'. Acts as a negative regulator of mitochondrial fusion by mediating deubiquitination of MFN1 and MFN2. This chain is Ubiquitin carboxyl-terminal hydrolase 30, found in Homo sapiens (Human).